An 835-amino-acid polypeptide reads, in one-letter code: MDVLTRFNSGKLWDFKGGVHPPERKSQSNQKPIRHAKLVEHFYIPVVQHAGEAGNILVKVGDYVFKGQPLTQGDGLRVLPVHASTSGFIRAIAPYASAHPSGLATLCLHLEADGKDQWREQQPLDDFLTQTPEKLIEKLYQAGVAGLGGAVFPTAAKLHSAEKQVKLLIINGAECEPYITCDDRLMRDYADEIIEGTRILRYILRPEKVVIAVEDNKPEAVAALRQVLQGANDIEIRVIPTKYPSGAAKQLIQILTGMEVPSGQRSSSIGVLMQNVATAFAVKRAIMDDEPLIERVVTLTGDKVRHKGNYWVRLGTPIYQLLQQVDYHYDDRFPVFMGGPMMGFILPDLQAPVTKMTNCLLAPDHFEYAPPAPEQSCIRCSACSDACPVSLMPQQLYWFARSEDHEKSEEYALKDCIECGLCAYVCPSHIPLIQYFRQEKAKIWEIQQKAKQAEEAKQRFEARQARLAREEQERKARAQKAMEARRQEMKTAQGIDPVQAALERLKAKKTDNDSSAKVEIKTIVTEKGDILPDNSDIMAQRKARRLARQQQTQNTDVSQVETNEENKSTDSKSAVAAAIARAKAKKAAQQGSALEKDEISSSDTLSVGNDTEPVAEDPRKAAIAAAIARAKAKKAAQQGSAVEKDEISSSNTLSVGNDTEPVADDPRKVAIAAAIARAKAKKAAQQGSAVEQDEISSSDTLSIGNEAEPVADDPRKAAIAAAIARAKAKKAAQQRSAVEQDEISSSDTLSVGNETESVAEDPRKAAIAAAIARAKAKKAAQQRSAVEQDEISSSDTLSVGNETESVAEDPRKAAIAAAIARAKAKKAAKANNHDA.

2 consecutive 4Fe-4S ferredoxin-type domains span residues 368–397 (YAPP…QQLY) and 407–436 (KSEE…IQYF). The [4Fe-4S] cluster site is built by Cys377, Cys380, Cys383, Cys387, Cys416, Cys419, Cys422, and Cys426. Positions 468 to 489 (AREEQERKARAQKAMEARRQEM) are enriched in basic and acidic residues. Disordered regions lie at residues 468–492 (AREE…MKTA), 540–574 (QRKA…SKSA), 586–618 (KAAQ…AEDP), 634–666 (KAAQ…ADDP), 682–714 (KAAQ…ADDP), 730–762 (KAAQ…AEDP), and 778–811 (KAAQ…EDPR). A compositionally biased stretch (polar residues) spans 552–561 (TQNTDVSQVE). The span at 648–657 (SSSNTLSVGN) shows a compositional bias: polar residues. Polar residues-rich tracts occupy residues 745 to 756 (SSDTLSVGNETE) and 793 to 804 (SSDTLSVGNETE).

Belongs to the 4Fe4S bacterial-type ferredoxin family. RnfC subfamily. The complex is composed of six subunits: RnfA, RnfB, RnfC, RnfD, RnfE and RnfG. It depends on [4Fe-4S] cluster as a cofactor.

The protein localises to the cell inner membrane. Part of a membrane-bound complex that couples electron transfer with translocation of ions across the membrane. In Pasteurella multocida (strain Pm70), this protein is Ion-translocating oxidoreductase complex subunit C.